Here is a 271-residue protein sequence, read N- to C-terminus: Energy-coupling factor transporter ATP-binding protein EcfA (271 aa).

Residues 2–231 (ISIQNLTFYY…PLFLQQYKLT (230 aa)) form the ABC transporter domain. Residue 34–41 (GHNGSGKS) coordinates ATP.

It belongs to the ABC transporter superfamily. Energy-coupling factor EcfA family. As to quaternary structure, forms a stable energy-coupling factor (ECF) transporter complex composed of 2 membrane-embedded substrate-binding proteins (S component), 2 ATP-binding proteins (A component) and 2 transmembrane proteins (T component).

The protein resides in the cell membrane. Its function is as follows. ATP-binding (A) component of a common energy-coupling factor (ECF) ABC-transporter complex. Unlike classic ABC transporters this ECF transporter provides the energy necessary to transport a number of different substrates. The protein is Energy-coupling factor transporter ATP-binding protein EcfA of Aster yellows witches'-broom phytoplasma (strain AYWB).